The primary structure comprises 299 residues: Protein FAM228A (299 aa).

A disordered region spans residues 135–201; that stretch reads AKGTSYQHGR…GRNRYKGASS (67 aa). Residues 146 to 159 are compositionally biased toward basic and acidic residues; the sequence is KTHDTQKEAKETEK. S264 is modified (phosphoserine).

The protein belongs to the FAM228 family.

The sequence is that of Protein FAM228A (Fam228a) from Mus musculus (Mouse).